A 208-amino-acid chain; its full sequence is Riboflavin synthase (208 aa).

2 Lumazine-binding repeats span residues 1–97 and 98–195; these read MFTG…MGGH and FVQG…EKLV. 2,4-dihydroxypteridine contacts are provided by residues 4–6, 48–50, 62–67, 101–103, K137, 146–148, and 160–165; these read GLV, CLT, GIAPES, GHV, SLT, and MMISYT.

In terms of assembly, homotrimer.

The catalysed reaction is 2 6,7-dimethyl-8-(1-D-ribityl)lumazine + H(+) = 5-amino-6-(D-ribitylamino)uracil + riboflavin. It participates in cofactor biosynthesis; riboflavin biosynthesis; riboflavin from 2-hydroxy-3-oxobutyl phosphate and 5-amino-6-(D-ribitylamino)uracil: step 2/2. Catalyzes the dismutation of two molecules of 6,7-dimethyl-8-ribityllumazine, resulting in the formation of riboflavin and 5-amino-6-(D-ribitylamino)uracil. This chain is Riboflavin synthase (rib5), found in Schizosaccharomyces pombe (strain 972 / ATCC 24843) (Fission yeast).